A 486-amino-acid chain; its full sequence is Cobyric acid synthase (486 aa).

One can recognise a GATase cobBQ-type domain in the interval 250 to 438 (AFRIVVPVPP…LHGMFDTPSA (189 aa)). Cys331 functions as the Nucleophile in the catalytic mechanism. His430 is an active-site residue.

It belongs to the CobB/CobQ family. CobQ subfamily.

It participates in cofactor biosynthesis; adenosylcobalamin biosynthesis. Functionally, catalyzes amidations at positions B, D, E, and G on adenosylcobyrinic A,C-diamide. NH(2) groups are provided by glutamine, and one molecule of ATP is hydrogenolyzed for each amidation. In Herminiimonas arsenicoxydans, this protein is Cobyric acid synthase.